The following is a 625-amino-acid chain: Coagulation factor XI (625 aa).

An N-terminal signal peptide occupies residues 1-18 (MIFLYQVVHFILFTSVSG). 4 Apple domains span residues 20-103 (CVTQ…FKQC), 110-193 (CNKD…LKSC), 200-283 (CIRD…LQSC), and 291-374 (CHSS…LRLC). Intrachain disulfides connect Cys20-Cys103, Cys46-Cys76, Cys50-Cys56, Cys110-Cys193, Cys136-Cys165, Cys140-Cys146, Cys200-Cys283, Cys226-Cys255, Cys230-Cys236, Cys291-Cys374, Cys317-Cys346, Cys321-Cys327, Cys380-Cys500, Cys416-Cys432, Cys514-Cys581, Cys545-Cys560, and Cys571-Cys599. 2 N-linked (GlcNAc...) (complex) asparagine glycosylation sites follow: Asn90 and Asn126. N-linked (GlcNAc...) (complex) asparagine; atypical glycosylation is present at Asn163. Positions 388-623 (IVGGTASVRG…YVDWILEKTQ (236 aa)) constitute a Peptidase S1 domain. Catalysis depends on His431, which acts as the Charge relay system. The N-linked (GlcNAc...) (complex) asparagine glycan is linked to Asn450. Asp480 (charge relay system) is an active-site residue. Asn491 is a glycosylation site (N-linked (GlcNAc...) (complex) asparagine). 547-550 (KRYR) contributes to the heparin binding site. Ser575 (charge relay system) is an active-site residue.

The protein belongs to the peptidase S1 family. Plasma kallikrein subfamily. Homodimer; disulfide-linked. Can form non-covalently bonded homodimers. After activation the heavy and light chains are also linked by a disulfide bond. Interacts (activated) with F9 (inactive and activated) in calcium-dependent manner. Forms a heterodimer with SERPINA5. Interacts with Anopheles gambiae D7L2. Interacts (activated) with guianensin, an anticoagulant protein from Simulium guianense saliva. N-glycosylated on both chains. N-glycosylated sites mainly consist of nonfucosylated sialylated biantennary (in high abundance) and/or triantennary (in low abundance) complex structures. Glycosylation at Asn-163 uses a rare non-canonical Asn-X-Cys glycosite. Post-translationally, activated by factor XIIa (or XII), which cleaves each polypeptide after Arg-387 into the light chain, which contains the active site, and the heavy chain, which associates with high molecular weight (HMW) kininogen. Activated by F12 (activated); the presence of negatively charged surfaces accelerates activation. Activated by F2 (thrombin); the presence of negatively charged surfaces, such as polyphosphate and dextran sulfate, strongly accelerates activation. Autoactivated; the presence of negatively charged surfaces, such as polyphosphate and dextran sulfate, accelerates autoactivation and autolysis. Isoform 2 is produced by platelets and megakaryocytes but absent from other blood cells.

It is found in the secreted. It carries out the reaction Selective cleavage of Arg-|-Ala and Arg-|-Val bonds in factor IX to form factor IXa.. Its activity is regulated as follows. Inhibited by SERPINA5. Factor XI triggers the middle phase of the intrinsic pathway of blood coagulation by activating factor IX. The protein is Coagulation factor XI (F11) of Homo sapiens (Human).